Here is a 261-residue protein sequence, read N- to C-terminus: Cytochrome c oxidase subunit 3 (261 aa).

At 1–15 (MTHQTHAYHTVNPSP) the chain is on the mitochondrial matrix side. The chain crosses the membrane as a helical span at residues 16-34 (WPLTGALSALLMTSGLIMW). Topologically, residues 35 to 40 (FHFNSP) are mitochondrial intermembrane. A helical transmembrane segment spans residues 41–66 (LLLVLGLTTNFLTMYQWWRDIIREST). The Mitochondrial matrix portion of the chain corresponds to 67 to 72 (FQGHHT). The helical transmembrane segment at 73–105 (TIVQKGLRYGMILFIVSEVFFFAGFFWAFYHSS) threads the bilayer. Residues 106–128 (LAPTPELGGCWPPTGINPLNPLE) lie on the Mitochondrial intermembrane side of the membrane. Residues 129–152 (VPLLNTSVLLASGVSITWAHHSLM) traverse the membrane as a helical segment. At 153-155 (EGH) the chain is on the mitochondrial matrix side. The helical transmembrane segment at 156-183 (RKHMLQALFITIALGVYFTLLQASEYYE) threads the bilayer. The Mitochondrial intermembrane portion of the chain corresponds to 184-190 (APFTISD). A helical membrane pass occupies residues 191 to 223 (GIYGSTFFVATGFHGLHVIIGSSFLIVCFMRQL). Residues 224–232 (KFHFTSSHH) lie on the Mitochondrial matrix side of the membrane. Residues 233–256 (FGFEAAAWYWHFVDVVWLFLYVSI) traverse the membrane as a helical segment. Residues 257–261 (YWWGS) lie on the Mitochondrial intermembrane side of the membrane.

The protein belongs to the cytochrome c oxidase subunit 3 family. Component of the cytochrome c oxidase (complex IV, CIV), a multisubunit enzyme composed of 14 subunits. The complex is composed of a catalytic core of 3 subunits MT-CO1, MT-CO2 and MT-CO3, encoded in the mitochondrial DNA, and 11 supernumerary subunits COX4I, COX5A, COX5B, COX6A, COX6B, COX6C, COX7A, COX7B, COX7C, COX8 and NDUFA4, which are encoded in the nuclear genome. The complex exists as a monomer or a dimer and forms supercomplexes (SCs) in the inner mitochondrial membrane with NADH-ubiquinone oxidoreductase (complex I, CI) and ubiquinol-cytochrome c oxidoreductase (cytochrome b-c1 complex, complex III, CIII), resulting in different assemblies (supercomplex SCI(1)III(2)IV(1) and megacomplex MCI(2)III(2)IV(2)).

The protein resides in the mitochondrion inner membrane. It carries out the reaction 4 Fe(II)-[cytochrome c] + O2 + 8 H(+)(in) = 4 Fe(III)-[cytochrome c] + 2 H2O + 4 H(+)(out). Functionally, component of the cytochrome c oxidase, the last enzyme in the mitochondrial electron transport chain which drives oxidative phosphorylation. The respiratory chain contains 3 multisubunit complexes succinate dehydrogenase (complex II, CII), ubiquinol-cytochrome c oxidoreductase (cytochrome b-c1 complex, complex III, CIII) and cytochrome c oxidase (complex IV, CIV), that cooperate to transfer electrons derived from NADH and succinate to molecular oxygen, creating an electrochemical gradient over the inner membrane that drives transmembrane transport and the ATP synthase. Cytochrome c oxidase is the component of the respiratory chain that catalyzes the reduction of oxygen to water. Electrons originating from reduced cytochrome c in the intermembrane space (IMS) are transferred via the dinuclear copper A center (CU(A)) of subunit 2 and heme A of subunit 1 to the active site in subunit 1, a binuclear center (BNC) formed by heme A3 and copper B (CU(B)). The BNC reduces molecular oxygen to 2 water molecules using 4 electrons from cytochrome c in the IMS and 4 protons from the mitochondrial matrix. This chain is Cytochrome c oxidase subunit 3 (MT-CO3), found in Dasypus novemcinctus (Nine-banded armadillo).